Reading from the N-terminus, the 337-residue chain is Holliday junction branch migration complex subunit RuvB (337 aa).

The interval 1 to 22 is disordered; it reads MEDERITSAEVQSPDEENEELS. Residues 1–184 form a large ATPase domain (RuvB-L) region; that stretch reads MEDERITSAE…FGIVEHMNYY (184 aa). ATP contacts are provided by residues Leu-23, Arg-24, Gly-65, Lys-68, Thr-69, Thr-70, 131 to 133, Arg-174, Tyr-184, and Arg-221; that span reads EDF. Thr-69 contacts Mg(2+). Residues 185 to 255 are small ATPAse domain (RuvB-S); the sequence is NEADLANIVR…LVSQSLKLLQ (71 aa). The segment at 258 to 337 is head domain (RuvB-H); that stretch reads NRGLDRTDKK…LGLIDQYMNK (80 aa). 2 residues coordinate DNA: Arg-313 and Arg-318.

It belongs to the RuvB family. In terms of assembly, homohexamer. Forms an RuvA(8)-RuvB(12)-Holliday junction (HJ) complex. HJ DNA is sandwiched between 2 RuvA tetramers; dsDNA enters through RuvA and exits via RuvB. An RuvB hexamer assembles on each DNA strand where it exits the tetramer. Each RuvB hexamer is contacted by two RuvA subunits (via domain III) on 2 adjacent RuvB subunits; this complex drives branch migration. In the full resolvosome a probable DNA-RuvA(4)-RuvB(12)-RuvC(2) complex forms which resolves the HJ.

It is found in the cytoplasm. It carries out the reaction ATP + H2O = ADP + phosphate + H(+). Functionally, the RuvA-RuvB-RuvC complex processes Holliday junction (HJ) DNA during genetic recombination and DNA repair, while the RuvA-RuvB complex plays an important role in the rescue of blocked DNA replication forks via replication fork reversal (RFR). RuvA specifically binds to HJ cruciform DNA, conferring on it an open structure. The RuvB hexamer acts as an ATP-dependent pump, pulling dsDNA into and through the RuvAB complex. RuvB forms 2 homohexamers on either side of HJ DNA bound by 1 or 2 RuvA tetramers; 4 subunits per hexamer contact DNA at a time. Coordinated motions by a converter formed by DNA-disengaged RuvB subunits stimulates ATP hydrolysis and nucleotide exchange. Immobilization of the converter enables RuvB to convert the ATP-contained energy into a lever motion, pulling 2 nucleotides of DNA out of the RuvA tetramer per ATP hydrolyzed, thus driving DNA branch migration. The RuvB motors rotate together with the DNA substrate, which together with the progressing nucleotide cycle form the mechanistic basis for DNA recombination by continuous HJ branch migration. Branch migration allows RuvC to scan DNA until it finds its consensus sequence, where it cleaves and resolves cruciform DNA. In Pediococcus pentosaceus (strain ATCC 25745 / CCUG 21536 / LMG 10740 / 183-1w), this protein is Holliday junction branch migration complex subunit RuvB.